The chain runs to 340 residues: Lipopolysaccharide heptosyltransferase 3 (340 aa).

The protein belongs to the glycosyltransferase 9 family.

The catalysed reaction is an L-alpha-D-Hep-(1-&gt;3)-4-O-phospho-L-alpha-D-Hep-(1-&gt;5)-[alpha-Kdo-(2-&gt;4)]-alpha-Kdo-(2-&gt;6)-lipid A + ADP-L-glycero-beta-D-manno-heptose = an L-alpha-D-Hep-(1-&gt;7)-L-alpha-D-Hep-(1-&gt;3)-4-O-phospho-L-alpha-D-Hep-(1-&gt;5)-[alpha-Kdo-(2-&gt;4)]-alpha-Kdo-(2-&gt;6)-lipid A + ADP + H(+). It catalyses the reaction L-alpha-D-Hep-(1-&gt;3)-4-O-phospho-L-alpha-D-Hep-(1-&gt;5)-[alpha-Kdo-(2-&gt;4)]-alpha-Kdo-(2-&gt;6)-lipid A (E. coli) + ADP-L-glycero-beta-D-manno-heptose = L-alpha-D-Hep-(1-&gt;7)-L-alpha-D-Hep-(1-&gt;3)-4-O-phospho-L-alpha-D-Hep-(1-&gt;5)-[alpha-Kdo-(2-&gt;4)]-alpha-Kdo-(2-&gt;6)-lipid A (E. coli) + ADP + H(+). Its pathway is bacterial outer membrane biogenesis; LPS core biosynthesis. In terms of biological role, glycosyltransferase involved in the biosynthesis of the core oligosaccharide region of lipopolysaccharide (LPS). Catalyzes the addition of the third heptose unit (HepIII) to the second heptose unit (HepII) of the phospho-Hep2-Kdo2-lipid A module. The transfer of HepIII seems to be a prerequisite to the phosphorylation of the second heptose unit. This Escherichia coli protein is Lipopolysaccharide heptosyltransferase 3.